Reading from the N-terminus, the 396-residue chain is Na(+)/H(+) antiporter NhaA 2 (396 aa).

11 helical membrane passes run leucine 17–phenylalanine 37, leucine 62–isoleucine 82, serine 98–leucine 118, glycine 125–glycine 145, leucine 154–phenylalanine 174, leucine 179–tyrosine 199, isoleucine 209–alanine 229, phenylalanine 268–phenylalanine 288, leucine 296–phenylalanine 316, isoleucine 337–leucine 357, and valine 368–isoleucine 388.

The protein belongs to the NhaA Na(+)/H(+) (TC 2.A.33) antiporter family.

It is found in the cell inner membrane. It catalyses the reaction Na(+)(in) + 2 H(+)(out) = Na(+)(out) + 2 H(+)(in). In terms of biological role, na(+)/H(+) antiporter that extrudes sodium in exchange for external protons. The polypeptide is Na(+)/H(+) antiporter NhaA 2 (Aliarcobacter butzleri (strain RM4018) (Arcobacter butzleri)).